A 412-amino-acid polypeptide reads, in one-letter code: Phosphoribosylamine--glycine ligase (412 aa).

One can recognise an ATP-grasp domain in the interval 108–309 (KSIMKKYGVP…LAQAIIDILA (202 aa)). An ATP-binding site is contributed by 134 to 190 (LDEKGVPLVIKADGLAAGKGVTVAFDIETAKSALADIFSGSQGKVVIEEFLDGEEFS). Mg(2+) is bound by residues E279 and N281.

The protein belongs to the GARS family. It depends on Mg(2+) as a cofactor. Requires Mn(2+) as cofactor.

The enzyme catalyses 5-phospho-beta-D-ribosylamine + glycine + ATP = N(1)-(5-phospho-beta-D-ribosyl)glycinamide + ADP + phosphate + H(+). It functions in the pathway purine metabolism; IMP biosynthesis via de novo pathway; N(1)-(5-phospho-D-ribosyl)glycinamide from 5-phospho-alpha-D-ribose 1-diphosphate: step 2/2. This chain is Phosphoribosylamine--glycine ligase, found in Lactococcus lactis subsp. lactis (strain IL1403) (Streptococcus lactis).